Reading from the N-terminus, the 452-residue chain is mRNA export factor ICP27 homolog (452 aa).

The disordered stretch occupies residues 42–164; the sequence is EAIGSTPGED…RNDQTHDESY (123 aa). A compositionally biased stretch (basic and acidic residues) spans 98–107; it reads SNHHGGRDVE. The span at 129-144 shows a compositional bias: basic residues; sequence SRKHRDRSLSNRRRRP. A compositionally biased stretch (basic and acidic residues) spans 154-164; sequence ERNDQTHDESY. Positions 335, 417, 421, and 426 each coordinate Zn(2+). The segment at 335–426 adopts a CHC2-type zinc-finger fold; the sequence is CLLLNRDNDL…HQRECGRVEC (92 aa).

This sequence belongs to the HHV-1 ICP27 protein family. In terms of assembly, homodimer. Homodimerization is required for transactivation. Associates in a complex with RNA, and host export factors NXF1/TAP and ALYREF; these interactions allow nuclear export of viral transcripts. Interacts with three host shuttling SR proteins SRSF1, SRSF3 and SRSF7. Interacts with host SRPK1. Interacts with IE62; this interaction enhances IE62 transactivation. In terms of processing, phosphorylated in vitro by SRPK1.

It localises to the host cytoplasm. The protein resides in the host nucleus. Multifunctional regulator of the expression of viral genes that mediates nuclear export of viral intronless mRNAs. This immediate early (EI) protein promotes the nuclear export of viral intronless mRNAs by interacting with mRNAs and host NXF1/TAP. The sequence is that of mRNA export factor ICP27 homolog from Varicella-zoster virus (strain Dumas) (HHV-3).